The following is a 119-amino-acid chain: Large ribosomal subunit protein bL20 (119 aa).

This sequence belongs to the bacterial ribosomal protein bL20 family.

Its function is as follows. Binds directly to 23S ribosomal RNA and is necessary for the in vitro assembly process of the 50S ribosomal subunit. It is not involved in the protein synthesizing functions of that subunit. The polypeptide is Large ribosomal subunit protein bL20 (Geobacillus thermodenitrificans (strain NG80-2)).